Consider the following 271-residue polypeptide: MKRYVFMLSDGTGITAETLGNSLITQFENIQFEKITIPYIDSTHRAESVVLRINQCFSEQGTKPLVFMTLVDPEIRQAIKKAHACVFDLFSIFIGPLENELEEKSSYTVGRTHGVANVKSYSHRIEAIDFALSHDDGIKTRGYDKADIILIGVSRCGKTPSCLYMALQYGILAANYPFTEEDLVGFRLPEVLRPYKPKLFGLTIDAQRLQQIRSERRPNSKYASAEQCRLEVTEVEAMYQRENIPYINSTKYSIEEISTKVLAIAGLQRKI.

152–159 serves as a coordination point for ADP; that stretch reads GVSRCGKT.

The protein belongs to the pyruvate, phosphate/water dikinase regulatory protein family. PSRP subfamily.

The enzyme catalyses [pyruvate, water dikinase] + ADP = [pyruvate, water dikinase]-phosphate + AMP + H(+). The catalysed reaction is [pyruvate, water dikinase]-phosphate + phosphate + H(+) = [pyruvate, water dikinase] + diphosphate. In terms of biological role, bifunctional serine/threonine kinase and phosphorylase involved in the regulation of the phosphoenolpyruvate synthase (PEPS) by catalyzing its phosphorylation/dephosphorylation. The polypeptide is Putative phosphoenolpyruvate synthase regulatory protein (Legionella pneumophila (strain Paris)).